A 326-amino-acid chain; its full sequence is tRNA U34 carboxymethyltransferase (326 aa).

Carboxy-S-adenosyl-L-methionine contacts are provided by Lys91, Trp105, Lys110, Gly130, Met196, Tyr200, and Arg315.

It belongs to the class I-like SAM-binding methyltransferase superfamily. CmoB family. As to quaternary structure, homotetramer.

It catalyses the reaction carboxy-S-adenosyl-L-methionine + 5-hydroxyuridine(34) in tRNA = 5-carboxymethoxyuridine(34) in tRNA + S-adenosyl-L-homocysteine + H(+). Functionally, catalyzes carboxymethyl transfer from carboxy-S-adenosyl-L-methionine (Cx-SAM) to 5-hydroxyuridine (ho5U) to form 5-carboxymethoxyuridine (cmo5U) at position 34 in tRNAs. The chain is tRNA U34 carboxymethyltransferase from Tolumonas auensis (strain DSM 9187 / NBRC 110442 / TA 4).